The following is a 522-amino-acid chain: Serine/threonine-protein kinase BSK1-2 (522 aa).

Residues Met1–Ser54 are disordered. A lipid anchor (N-myristoyl glycine) is attached at Gly2. Residues Ala79–Gln338 enclose the Protein kinase domain. Residues Ser85–Val93 and Lys111 contribute to the ATP site. The Proton acceptor role is filled by Asp205.

It belongs to the protein kinase superfamily. Ser/Thr protein kinase family.

The protein localises to the cell membrane. It carries out the reaction L-seryl-[protein] + ATP = O-phospho-L-seryl-[protein] + ADP + H(+). The enzyme catalyses L-threonyl-[protein] + ATP = O-phospho-L-threonyl-[protein] + ADP + H(+). Probable serine/threonine kinase that functions as a positive regulator of plant immunity. May be involved in the regulation of pattern-triggered immunity (PTI). Does not seem to be involved in responses to brassinosteroid (BR) signaling. The protein is Serine/threonine-protein kinase BSK1-2 of Oryza sativa subsp. japonica (Rice).